The primary structure comprises 740 residues: Pheromone-regulated membrane protein 10 (740 aa).

3 disordered regions span residues 1–48 (MGKN…RSGL), 65–97 (FADEDEVVEQDEAAQKTEAVASESSSLADKEEC), and 241–269 (NQPGGQAPQRPGLRKSAQTLSSETLPTGE). The segment covering 7–18 (QAAEGEEARRGS) has biased composition (basic and acidic residues). The segment covering 19–33 (ESSGSSAEPSGAVAE) has biased composition (low complexity). Acidic residues predominate over residues 67-76 (DEDEVVEQDE). Over residues 256 to 267 (SAQTLSSETLPT) the composition is skewed to polar residues. The next 10 helical transmembrane spans lie at 422 to 442 (AWMCVLLYGFCASMVTPFAFG), 445 to 465 (WINLVVSFGIGCCVGLLQFIV), 475 to 495 (VFEITASIVVSFCARALGSIP), 499 to 519 (ICFGSTVQGSLALILPGYIIL), 541 to 561 (IIYSLFLGFGITLGAALFGWI), 574 to 594 (ELSPWFRFIFVPGFALGLSLI), 599 to 619 (WSQIPVMVCIACSGYVVTYWS), 622 to 642 (HFTASTEFTASIGAFVIGIMG), 651 to 671 (GLAMTAMLPGIFVQVPSGIAS), and 707 to 727 (ITMIQVCIGISVGLFASTLVV).

Belongs to the ThrE exporter (TC 2.A.79) family.

The protein localises to the membrane. The sequence is that of Pheromone-regulated membrane protein 10 from Eremothecium gossypii (strain ATCC 10895 / CBS 109.51 / FGSC 9923 / NRRL Y-1056) (Yeast).